The following is a 434-amino-acid chain: Adenylosuccinate synthetase (434 aa).

Residues 22-28 (GDEGKGK) and 50-52 (GHT) contribute to the GTP site. Asp-23 serves as the catalytic Proton acceptor. Residues Asp-23 and Gly-50 each contribute to the Mg(2+) site. IMP contacts are provided by residues 23 to 26 (DEGK), 48 to 51 (NAGH), Thr-139, Arg-153, Gln-234, Thr-249, and Arg-313. The active-site Proton donor is the His-51. Residue 309–315 (ATTGRKR) participates in substrate binding. GTP contacts are provided by residues Arg-315, 341-343 (KLD), and 423-425 (SVG).

The protein belongs to the adenylosuccinate synthetase family. Homodimer. Requires Mg(2+) as cofactor.

Its subcellular location is the cytoplasm. The catalysed reaction is IMP + L-aspartate + GTP = N(6)-(1,2-dicarboxyethyl)-AMP + GDP + phosphate + 2 H(+). The protein operates within purine metabolism; AMP biosynthesis via de novo pathway; AMP from IMP: step 1/2. Its function is as follows. Plays an important role in the de novo pathway of purine nucleotide biosynthesis. Catalyzes the first committed step in the biosynthesis of AMP from IMP. The sequence is that of Adenylosuccinate synthetase from Pelodictyon phaeoclathratiforme (strain DSM 5477 / BU-1).